The primary structure comprises 117 residues: MALETVPKDLRHLRACLLCSLVKTIDQFEYDGCDNCDAYLQMKGNREMVYDCTSSSFDGIVAMMSPDDSWVSKWQRITNFKPGVYAVSVTGRLPQGIVRELKSRGVVYKSRDTAIKT.

The segment at 1–40 (MALETVPKDLRHLRACLLCSLVKTIDQFEYDGCDNCDAYL) is interaction with SUPT5H. The segment at 16-36 (CLLCSLVKTIDQFEYDGCDNC) adopts a C4-type zinc-finger fold.

Belongs to the SPT4 family. Interacts with SUPT5H to form the DSIF complex. DSIF interacts with RNA polymerase II and with the positive transcription elongation factor b complex (P-TEFb complex), which is composed of CDK9 and cyclin-T.

It localises to the nucleus. May function as a component of the DRB sensitivity-inducing factor complex (DSIF complex), which regulates transcription elongation by RNA polymerase II. Probably enhances transcriptional pausing at sites proximal to the promoter, which may in turn facilitate the assembly of an elongation competent RNA polymerase II complex. The sequence is that of Transcription elongation factor SPT4 (supt4h1) from Xenopus laevis (African clawed frog).